Consider the following 152-residue polypeptide: Interleukin-3 (152 aa).

Positions 1–19 are cleaved as a signal peptide; that stretch reads MSCLPVLLLLQLLVSPGLQ. Residues Asn-34 and Asn-89 are each glycosylated (N-linked (GlcNAc...) asparagine). A disulfide bridge links Cys-35 with Cys-103.

This sequence belongs to the IL-3 family. As to quaternary structure, monomer. Activated T-cells, mast cells, natural killer cells.

Its subcellular location is the secreted. Its function is as follows. Granulocyte/macrophage colony-stimulating factors are cytokines that act in hematopoiesis by controlling the production, differentiation, and function of 2 related white cell populations of the blood, the granulocytes and the monocytes-macrophages. This CSF induces granulocytes, macrophages, mast cells, stem cells, erythroid cells, eosinophils and megakaryocytes. This Hylobates lar (Lar gibbon) protein is Interleukin-3 (IL3).